Here is a 123-residue protein sequence, read N- to C-terminus: WAP four-disulfide core domain protein 5 (123 aa).

Positions 1 to 24 are cleaved as a signal peptide; the sequence is MRTQSLLLLGALLAVGSQLPAVFG. WAP domains are found at residues 27-74 and 75-121; these read KGEK…VPRV and SVKL…RDPA. 8 disulfides stabilise this stretch: cysteine 34–cysteine 62, cysteine 41–cysteine 66, cysteine 49–cysteine 61, cysteine 55–cysteine 70, cysteine 81–cysteine 109, cysteine 88–cysteine 113, cysteine 96–cysteine 108, and cysteine 102–cysteine 117.

The protein resides in the secreted. Its function is as follows. Putative acid-stable proteinase inhibitor. In Gorilla gorilla gorilla (Western lowland gorilla), this protein is WAP four-disulfide core domain protein 5 (WFDC5).